Consider the following 281-residue polypeptide: MNIADGRQAFPAPAKLNLDLRITGRREDGYHNIESIFCLIDLQDTVYLKPRDDGKIILHNPVGGIPQEADLSYRAASLLQKYARNLAGVEIWLDKKIPTGAGLGGGSSDAATVLLVLNRWWQCGLTQWQLIDLGAALGADVPFFIFGKNAFASGIGKKLIGMDIPKQWYVIVKPPVHVSTAKIFTYEGLTRDSASSIMPTFQNLQPFRNDMQAVVFKEYPEVWKAYSELSKYGSAMMTGSGACIFAAFQARNSAYNIYRQVSGLYEAYLAEGLSKHPLLSV.

K15 is an active-site residue. ATP is bound at residue 98–108 (PTGAGLGGGSS). D140 is a catalytic residue.

This sequence belongs to the GHMP kinase family. IspE subfamily.

The catalysed reaction is 4-CDP-2-C-methyl-D-erythritol + ATP = 4-CDP-2-C-methyl-D-erythritol 2-phosphate + ADP + H(+). It participates in isoprenoid biosynthesis; isopentenyl diphosphate biosynthesis via DXP pathway; isopentenyl diphosphate from 1-deoxy-D-xylulose 5-phosphate: step 3/6. In terms of biological role, catalyzes the phosphorylation of the position 2 hydroxy group of 4-diphosphocytidyl-2C-methyl-D-erythritol. The polypeptide is 4-diphosphocytidyl-2-C-methyl-D-erythritol kinase (Neisseria gonorrhoeae (strain ATCC 700825 / FA 1090)).